Consider the following 936-residue polypeptide: Isoleucine--tRNA ligase (936 aa).

The 'HIGH' region motif lies at 58–68 (PYANGRAHLGT). An L-isoleucyl-5'-AMP-binding site is contributed by Glu-561. The 'KMSKS' region signature appears at 602–606 (KMSKS). Lys-605 provides a ligand contact to ATP. Residues Cys-899, Cys-902, Cys-919, and Cys-922 each coordinate Zn(2+).

It belongs to the class-I aminoacyl-tRNA synthetase family. IleS type 1 subfamily. Monomer. The cofactor is Zn(2+).

It localises to the cytoplasm. The enzyme catalyses tRNA(Ile) + L-isoleucine + ATP = L-isoleucyl-tRNA(Ile) + AMP + diphosphate. Functionally, catalyzes the attachment of isoleucine to tRNA(Ile). As IleRS can inadvertently accommodate and process structurally similar amino acids such as valine, to avoid such errors it has two additional distinct tRNA(Ile)-dependent editing activities. One activity is designated as 'pretransfer' editing and involves the hydrolysis of activated Val-AMP. The other activity is designated 'posttransfer' editing and involves deacylation of mischarged Val-tRNA(Ile). The sequence is that of Isoleucine--tRNA ligase from Coxiella burnetii (strain CbuG_Q212) (Coxiella burnetii (strain Q212)).